The chain runs to 147 residues: uncharacterized protein (147 aa).

Residues 1-137 (MRDNTIGSLI…LYELMTKVHK (137 aa)) form the HTH marR-type domain. A DNA-binding region (H-T-H motif) is located at residues 53 to 76 (QMELAEKVTVTQGGISRMLTRLEK).

This is an uncharacterized protein from Bacillus thuringiensis subsp. konkukian (strain 97-27).